We begin with the raw amino-acid sequence, 296 residues long: tRNA pseudouridine synthase B (296 aa).

The Nucleophile role is filled by D38.

It belongs to the pseudouridine synthase TruB family. Type 1 subfamily.

It carries out the reaction uridine(55) in tRNA = pseudouridine(55) in tRNA. Functionally, responsible for synthesis of pseudouridine from uracil-55 in the psi GC loop of transfer RNAs. This is tRNA pseudouridine synthase B from Ehrlichia ruminantium (strain Gardel).